The primary structure comprises 173 residues: Putative phosphoesterase GK0864 (173 aa).

The active-site Proton donor is His-34. 2 consecutive short sequence motifs (HXTX) follow at residues 34 to 37 (HITL) and 115 to 118 (HITI). Catalysis depends on His-115, which acts as the Proton acceptor.

The protein belongs to the 2H phosphoesterase superfamily. YjcG family.

The protein is Putative phosphoesterase GK0864 of Geobacillus kaustophilus (strain HTA426).